The sequence spans 245 residues: Carboxymethylenebutenolidase homolog (245 aa).

Position 2 is an N-acetylalanine (Ala2). Lys36 bears the N6-acetyllysine mark. Active-site residues include Cys132, Asp179, and His212. A Phosphoserine modification is found at Ser223.

Belongs to the dienelactone hydrolase family.

It localises to the cytoplasm. The protein resides in the cytosol. Functionally, cysteine hydrolase. In Pongo abelii (Sumatran orangutan), this protein is Carboxymethylenebutenolidase homolog (CMBL).